The primary structure comprises 357 residues: Golgi to ER traffic protein 2 (357 aa).

The Cytoplasmic portion of the chain corresponds to 1–224 (MSETTDKQLT…AKYHTYQEQL (224 aa)). The segment covering 65–81 (TDTATVTDSSTNATSVS) has biased composition (low complexity). Residues 65-99 (TDTATVTDSSTNATSVSPSAAKATPTSTGVSSAIS) are disordered. Residues 88-98 (TPTSTGVSSAI) are compositionally biased toward polar residues. Residues 225 to 245 (WQFRFLVVRILATIFNFAYHF) traverse the membrane as a helical segment. Residues 246–270 (ITIPSFTASNHAYVRDLSEVYPLLG) are Lumenal-facing. The chain crosses the membrane as a helical span at residues 271–290 (FMTIFTSIEVVIIATYYLLF). Over 291–334 (TKLGLFHASNQKSFILKGISTLSMFVPQLLRYEPLVATFLGYKE) the chain is Cytoplasmic. The helical transmembrane segment at 335 to 355 (LLGIFVGDLSLVVVMFGLLSF) threads the bilayer. Over 356–357 (SN) the chain is Lumenal.

The protein belongs to the GET2 family. Component of the Golgi to ER traffic (GET) complex, which is composed of GET1, GET2 and GET3. Within the complex, GET1 and GET2 form a heterotetramer which is stabilized by phosphatidylinositol binding and which binds to the GET3 homodimer.

Its subcellular location is the endoplasmic reticulum membrane. The protein localises to the golgi apparatus membrane. Required for the post-translational delivery of tail-anchored (TA) proteins to the endoplasmic reticulum. Together with GET1, acts as a membrane receptor for soluble GET3, which recognizes and selectively binds the transmembrane domain of TA proteins in the cytosol. The GET complex cooperates with the HDEL receptor ERD2 to mediate the ATP-dependent retrieval of resident ER proteins that contain a C-terminal H-D-E-L retention signal from the Golgi to the ER. This is Golgi to ER traffic protein 2 from Lodderomyces elongisporus (strain ATCC 11503 / CBS 2605 / JCM 1781 / NBRC 1676 / NRRL YB-4239) (Yeast).